Consider the following 405-residue polypeptide: uncharacterized protein (405 aa).

Helical transmembrane passes span 19 to 39 (IVSI…PLAV), 47 to 67 (VMGF…FATL), 85 to 105 (IVVF…TAGL), 107 to 127 (ASLP…LGIG), 156 to 176 (GIVT…FYHW), 178 to 198 (GLQA…LLAI), 224 to 244 (GMAL…ITLF), 252 to 272 (GAAF…LLFP), 283 to 303 (VAMI…VATM), 309 to 329 (IGVL…GVVA), 344 to 364 (TYTV…GLVM), and 366 to 386 (WAGV…ALLL).

Belongs to the major facilitator superfamily. YhhS family.

The protein localises to the cell inner membrane. This is an uncharacterized protein from Escherichia coli O6:H1 (strain CFT073 / ATCC 700928 / UPEC).